The sequence spans 420 residues: Serine hydroxymethyltransferase (420 aa).

Residues Leu-121 and 125–127 contribute to the (6S)-5,6,7,8-tetrahydrofolate site; that span reads GHL. At Lys-230 the chain carries N6-(pyridoxal phosphate)lysine. (6S)-5,6,7,8-tetrahydrofolate contacts are provided by residues Glu-246 and 354–356; that span reads SPF.

It belongs to the SHMT family. As to quaternary structure, homodimer. It depends on pyridoxal 5'-phosphate as a cofactor.

It localises to the cytoplasm. It carries out the reaction (6R)-5,10-methylene-5,6,7,8-tetrahydrofolate + glycine + H2O = (6S)-5,6,7,8-tetrahydrofolate + L-serine. The protein operates within one-carbon metabolism; tetrahydrofolate interconversion. It functions in the pathway amino-acid biosynthesis; glycine biosynthesis; glycine from L-serine: step 1/1. In terms of biological role, catalyzes the reversible interconversion of serine and glycine with tetrahydrofolate (THF) serving as the one-carbon carrier. This reaction serves as the major source of one-carbon groups required for the biosynthesis of purines, thymidylate, methionine, and other important biomolecules. Also exhibits THF-independent aldolase activity toward beta-hydroxyamino acids, producing glycine and aldehydes, via a retro-aldol mechanism. The sequence is that of Serine hydroxymethyltransferase from Rickettsia massiliae (strain Mtu5).